The following is a 523-amino-acid chain: Cryptochrome DASH (523 aa).

A Photolyase/cryptochrome alpha/beta domain is found at 6–142 (RVIICLLRND…KYQTFWGSTL (137 aa)). 2 disordered regions span residues 174 to 211 (RPTF…TDPR) and 486 to 523 (KPAG…NKDV). Positions 496–510 (RRGKGPSHTPKQHKN) are enriched in basic residues.

The protein belongs to the DNA photolyase class-1 family. FAD serves as cofactor. Requires (6R)-5,10-methylene-5,6,7,8-tetrahydrofolate as cofactor.

Its function is as follows. May have a photoreceptor function. Has weak cyclobutyl pyrimidine photolyase activity when expressed in E.coli and when tested in vitro. The sequence is that of Cryptochrome DASH (cry-dash) from Xenopus laevis (African clawed frog).